A 498-amino-acid chain; its full sequence is Protein adenylyltransferase Fic (498 aa).

Residues 43–63 (FAFLAFLAGSFLAFSLHALIS) traverse the membrane as a helical segment. 2 TPR repeats span residues 126–159 (ALSS…APRH) and 160–194 (PEVL…NPSH). The Inhibitory (S/T)XXXE(G/N) motif signature appears at 251–256 (SVGIEG). ATP is bound by residues glutamate 255 and 336 to 339 (VGGH). The 136-residue stretch at 305 to 440 (ITIKDILELH…IRPFVRFIAD (136 aa)) folds into the Fido domain. The active site involves histidine 383. Residues 387-394 (DGNGRTSR), 419-420 (YY), and asparagine 427 contribute to the ATP site.

This sequence belongs to the fic family. Homodimer.

It localises to the membrane. The enzyme catalyses L-tyrosyl-[protein] + ATP = O-(5'-adenylyl)-L-tyrosyl-[protein] + diphosphate. It catalyses the reaction L-threonyl-[protein] + ATP = 3-O-(5'-adenylyl)-L-threonyl-[protein] + diphosphate. It carries out the reaction 3-O-(5'-adenylyl)-L-threonyl-[protein] + H2O = L-threonyl-[protein] + AMP + H(+). The side chain of Glu-255 determines which of the two opposing activities (AMPylase or de-AMPylase) will take place. In response to endoplasmic reticulum stress, mediates de-AMPylase activity. Adenylyltransferase activity is inhibited by the inhibitory helix present at the N-terminus: Glu-255 binds ATP and competes with ATP-binding at Arg-394, thereby preventing adenylyltransferase activity. In unstressed cells, disengagement of Glu-255 promotes adenylyltransferase activity. Activation dissociates ATP-binding from Glu-255, allowing ordered binding of the entire ATP moiety with the alpha-phosphate in an orientation that is productive for accepting an incoming target hydroxyl side chain. Protein that can both mediate the addition of adenosine 5'-monophosphate (AMP) to specific residues of target proteins (AMPylation), and the removal of the same modification from target proteins (de-AMPylation), depending on the context. The side chain of Glu-255 determines which of the two opposing activities (AMPylase or de-AMPylase) will take place. Acts as a key regulator of the unfolded protein response (UPR) by mediating AMPylation or de-AMPylation of Hsc70-3/BiP. In unstressed cells, acts as an adenylyltransferase by mediating AMPylation of Hsc70-3/BiP at 'Thr-518', thereby inactivating it. In response to endoplasmic reticulum stress, acts as a phosphodiesterase by mediating removal of ATP (de-AMPylation) from Hsc70-3/BiP at 'Thr-518', leading to restore HSPA5/BiP activity. The sequence is that of Protein adenylyltransferase Fic from Drosophila willistoni (Fruit fly).